Consider the following 922-residue polypeptide: Lacticin 481/lactococcin biosynthesis protein LcnDR2 (922 aa).

Functionally, could be implicated in the processing or the export process of the lantibiotic lacticin 481/lactococcin DR. The protein is Lacticin 481/lactococcin biosynthesis protein LcnDR2 (lcnDR2) of Lactococcus lactis subsp. lactis (Streptococcus lactis).